The following is a 303-amino-acid chain: Protease HtpX homolog (303 aa).

2 helical membrane-spanning segments follow: residues 4–24 and 38–58; these read VVLF…TARI and MGML…ISLL. His-144 lines the Zn(2+) pocket. Glu-145 is an active-site residue. His-148 contributes to the Zn(2+) binding site. Transmembrane regions (helical) follow at residues 152-172 and 199-219; these read GDMV…IFLS and ISSI…VMYF. Glu-224 is a binding site for Zn(2+).

The protein belongs to the peptidase M48B family. Zn(2+) serves as cofactor.

It is found in the cell inner membrane. In Chlorobium phaeobacteroides (strain BS1), this protein is Protease HtpX homolog.